The sequence spans 244 residues: Multiple organellar RNA editing factor 3, mitochondrial (244 aa).

Residues 1 to 62 (MALISTRRTL…GPCYISTRPK (62 aa)) constitute a mitochondrion transit peptide. 2 disordered regions span residues 59–82 (TRPK…SNRP) and 196–244 (YRFT…KPSA). The span at 60–80 (RPKTSGSGYSPLNDPSPNWSN) shows a compositional bias: polar residues. A compositionally biased stretch (basic and acidic residues) spans 210-226 (PRYDRRRETMQVERREP).

Belongs to the MORF family. As to quaternary structure, heterodimer with MORF1. Homodimer and heterodimers with MORF8/RIP1, MORF4/RIP4 and MORF5/RIP5.

It is found in the mitochondrion. Its function is as follows. Involved in organellar RNA editing. Required for the processing of RNA editing sites in mitochondria. The sequence is that of Multiple organellar RNA editing factor 3, mitochondrial from Arabidopsis thaliana (Mouse-ear cress).